The primary structure comprises 280 residues: Protease HtpX (280 aa).

The next 2 helical transmembrane spans lie at 7–26 and 30–49; these read TFIL…GLLG and GMLV…YWYS. Residue His129 coordinates Zn(2+). Residue Glu130 is part of the active site. His133 is a Zn(2+) binding site. The next 2 helical transmembrane spans lie at 146 to 166 and 178 to 198; these read ATIA…SMFG and VVGM…QMAI. Glu203 lines the Zn(2+) pocket.

This sequence belongs to the peptidase M48B family. Zn(2+) serves as cofactor.

The protein localises to the cell inner membrane. This is Protease HtpX from Legionella pneumophila (strain Corby).